The sequence spans 79 residues: CDC42 small effector protein 1-B (79 aa).

2 S-palmitoyl cysteine lipidation sites follow: cysteine 10 and cysteine 11. The CRIB domain occupies 30–43 (IGEPMNFVHLTHIG). A disordered region spans residues 41–79 (HIGSGDMGASDGLPKAGTVQEQMRSKCGRDRQWSNSRVL). The span at 63–72 (MRSKCGRDRQ) shows a compositional bias: basic and acidic residues.

It belongs to the CDC42SE/SPEC family.

It is found in the cytoplasm. The protein resides in the cytoskeleton. The protein localises to the cell membrane. Probably involved in the organization of the actin cytoskeleton by acting downstream of CDC42, inducing actin filament assembly. This Xenopus laevis (African clawed frog) protein is CDC42 small effector protein 1-B (cdc42se1-b).